A 96-amino-acid chain; its full sequence is Large ribosomal subunit protein bL27 (96 aa).

Positions 1–9 are excised as a propeptide; sequence MLRLDLQFF.

This sequence belongs to the bacterial ribosomal protein bL27 family. The N-terminus is cleaved by ribosomal processing cysteine protease Prp.

This Geobacillus sp. (strain WCH70) protein is Large ribosomal subunit protein bL27.